The primary structure comprises 374 residues: Calcium/calmodulin-dependent protein kinase type 1 (374 aa).

In terms of domain architecture, Protein kinase spans 20-276 (YDFRDVLGTG…CEQALQHPWI (257 aa)). ATP is bound by residues 26 to 34 (LGTGAFSEV) and Lys49. Lys59 participates in a covalent cross-link: Glycyl lysine isopeptide (Lys-Gly) (interchain with G-Cter in ubiquitin). Asp141 acts as the Proton acceptor in catalysis. Thr177 carries the phosphothreonine; by CaMKK1 and CaMKK2 modification. Positions 276 to 316 (IAGDTALDKNIHQSVSEQIKKNFAKSKWKQAFNATAVVRHM) are autoinhibitory domain. The segment at 296–317 (KNFAKSKWKQAFNATAVVRHMR) is calmodulin-binding. Positions 315 to 321 (HMRKLQL) match the Nuclear export signal motif.

This sequence belongs to the protein kinase superfamily. CAMK Ser/Thr protein kinase family. CaMK subfamily. Monomer. Interacts with XPO1. Post-translationally, phosphorylated by CaMKK1 and CaMKK2 on Thr-177. In terms of processing, polybiquitinated by the E3 ubiquitin-protein ligase complex SCF(FBXL12), leading to proteasomal degradation. As to expression, ubiquitous.

Its subcellular location is the cytoplasm. It localises to the nucleus. It catalyses the reaction L-seryl-[protein] + ATP = O-phospho-L-seryl-[protein] + ADP + H(+). The enzyme catalyses L-threonyl-[protein] + ATP = O-phospho-L-threonyl-[protein] + ADP + H(+). With respect to regulation, activated by Ca(2+)/calmodulin. Binding of calmodulin results in conformational change that relieves intrasteric autoinhibition and allows phosphorylation of Thr-177 within the activation loop by CaMKK1 or CaMKK2. Phosphorylation of Thr-177 results in several fold increase in total activity. Unlike CaMK4, is unable to exhibit autonomous activity after Ca(2+)/calmodulin activation. Functionally, calcium/calmodulin-dependent protein kinase that operates in the calcium-triggered CaMKK-CaMK1 signaling cascade and, upon calcium influx, regulates transcription activators activity, cell cycle, hormone production, cell differentiation, actin filament organization and neurite outgrowth. Recognizes the substrate consensus sequence [MVLIF]-x-R-x(2)-[ST]-x(3)-[MVLIF]. Regulates axonal extension and growth cone motility in hippocampal and cerebellar nerve cells. Upon NMDA receptor-mediated Ca(2+) elevation, promotes dendritic growth in hippocampal neurons and is essential in synapses for full long-term potentiation (LTP) and ERK2-dependent translational activation. Downstream of NMDA receptors, promotes the formation of spines and synapses in hippocampal neurons by phosphorylating ARHGEF7/BETAPIX on 'Ser-673', which results in the enhancement of ARHGEF7 activity and activation of RAC1. Promotes neuronal differentiation and neurite outgrowth by activation and phosphorylation of MARK2 on 'Ser-91', 'Ser-92', 'Ser-93' and 'Ser-294'. Promotes nuclear export of HDAC5 and binding to 14-3-3 by phosphorylation of 'Ser-259' and 'Ser-498' in the regulation of muscle cell differentiation. Regulates NUMB-mediated endocytosis by phosphorylation of NUMB on 'Ser-276' and 'Ser-295'. Involved in the regulation of basal and estrogen-stimulated migration of medulloblastoma cells through ARHGEF7/BETAPIX phosphorylation. Is required for proper activation of cyclin-D1/CDK4 complex during G1 progression in diploid fibroblasts. Plays a role in K(+) and ANG2-mediated regulation of the aldosterone synthase (CYP11B2) to produce aldosterone in the adrenal cortex. Phosphorylates EIF4G3/eIF4GII. In vitro phosphorylates CREB1, ATF1, CFTR, MYL9 and SYN1/synapsin I. The protein is Calcium/calmodulin-dependent protein kinase type 1 (Camk1) of Mus musculus (Mouse).